Consider the following 539-residue polypeptide: Probable malate:quinone oxidoreductase 3 (539 aa).

The tract at residues 516 to 539 is disordered; it reads LEPPVSPQRPESIRPADSQGVASR.

Belongs to the MQO family. FAD is required as a cofactor.

It catalyses the reaction (S)-malate + a quinone = a quinol + oxaloacetate. It functions in the pathway carbohydrate metabolism; tricarboxylic acid cycle; oxaloacetate from (S)-malate (quinone route): step 1/1. The protein is Probable malate:quinone oxidoreductase 3 of Pseudomonas putida (strain ATCC 47054 / DSM 6125 / CFBP 8728 / NCIMB 11950 / KT2440).